Reading from the N-terminus, the 650-residue chain is Protein ANTI-SILENCING 1 (650 aa).

The BAH domain occupies Asp-38–Ile-169. Disordered regions lie at residues Asn-202 to Arg-223, Ala-229 to Lys-248, Lys-257 to Asp-359, and Val-425 to Asn-448. Composition is skewed to basic and acidic residues over residues Thr-259–Gly-270 and Asn-277–Lys-287. The segment covering Ser-302–Ser-315 has biased composition (polar residues). Composition is skewed to basic and acidic residues over residues Leu-348–Leu-358 and Arg-438–Asn-448. The 84-residue stretch at Thr-486–Ile-569 folds into the RRM domain.

In terms of assembly, component of the ASI1-AIPP1-EDM2 (AAE) RNA regulatory complex composed of at least AIPP1/EDM3, ASI1 and EDM2 and may contain CPL2, AIPP2 and AIPP3/BDT1. Binds directly to AIPP1/EDM3 and AIPP2.

In terms of biological role, collaboratively with AIPP1/EDM3 and EDM2, the AAE complex regulates alternative RNA processing (e.g. alternative splicing) and epigenetic silencing (e.g. H3K9me2) of intronic heterochromatin-containing genes as well as genic heterochromatin-containing genes by promoting distal 3' polyadenylation; may associate with intronic heterochromatin and bind gene transcripts to modulate polyadenylation. Required to prevent promoter DNA hypermethylation and transcriptional silencing of some transgenes. Plays a similar role to that of the histone H3K9 demethylase JMJ25/IBM1 in preventing CHG methylation in the bodies of numerous genes. RNA-binding protein that ensures the proper expression of JMJ25/IBM1 full-length transcript by associating with an intronic heterochromatic repeat element of JMJ25/IBM1. Also modulates transposable elements (TE) expression. Contributes to a unique mechanism to deal with the collateral effect of silencing intronic repeat elements. This Arabidopsis thaliana (Mouse-ear cress) protein is Protein ANTI-SILENCING 1.